A 459-amino-acid chain; its full sequence is Eukaryotic translation initiation factor 3 subunit M (459 aa).

One can recognise a PCI domain in the interval 207–384 (LDWAQTHVVD…SEFLVHRATY (178 aa)). The segment at 431–459 (AAAEGEKGDKNNKGPSERRRAPQEIAAAE) is disordered. Over residues 434–452 (EGEKGDKNNKGPSERRRAP) the composition is skewed to basic and acidic residues.

It belongs to the eIF-3 subunit M family. Component of the eukaryotic translation initiation factor 3 (eIF-3) complex.

The protein localises to the cytoplasm. Its function is as follows. Component of the eukaryotic translation initiation factor 3 (eIF-3) complex, which is involved in protein synthesis of a specialized repertoire of mRNAs and, together with other initiation factors, stimulates binding of mRNA and methionyl-tRNAi to the 40S ribosome. The eIF-3 complex specifically targets and initiates translation of a subset of mRNAs involved in cell proliferation. In Emericella nidulans (strain FGSC A4 / ATCC 38163 / CBS 112.46 / NRRL 194 / M139) (Aspergillus nidulans), this protein is Eukaryotic translation initiation factor 3 subunit M.